Here is a 68-residue protein sequence, read N- to C-terminus: DNA gyrase inhibitor YacG (68 aa).

4 residues coordinate Zn(2+): cysteine 10, cysteine 13, cysteine 29, and cysteine 33. The disordered stretch occupies residues 45–68; it reads EKRIPSDTELSDSDEWSEEDPLKH. Acidic residues predominate over residues 53–68; sequence ELSDSDEWSEEDPLKH.

Belongs to the DNA gyrase inhibitor YacG family. As to quaternary structure, interacts with GyrB. The cofactor is Zn(2+).

Inhibits all the catalytic activities of DNA gyrase by preventing its interaction with DNA. Acts by binding directly to the C-terminal domain of GyrB, which probably disrupts DNA binding by the gyrase. This is DNA gyrase inhibitor YacG from Yersinia pseudotuberculosis serotype O:1b (strain IP 31758).